A 438-amino-acid chain; its full sequence is Aspartate--tRNA(Asp/Asn) ligase (438 aa).

Glu176 serves as a coordination point for L-aspartate. The interval 198-201 (QLYK) is aspartate. Arg220 provides a ligand contact to L-aspartate. Residues 220–222 (RAE), 228–230 (RHL), and Glu361 contribute to the ATP site. Mg(2+)-binding residues include Glu361 and Ser364. Residues Ser364 and Arg368 each contribute to the L-aspartate site. 409–412 (GADR) is a binding site for ATP.

Belongs to the class-II aminoacyl-tRNA synthetase family. Type 2 subfamily. Homodimer. Mg(2+) is required as a cofactor.

Its subcellular location is the cytoplasm. The enzyme catalyses tRNA(Asx) + L-aspartate + ATP = L-aspartyl-tRNA(Asx) + AMP + diphosphate. In terms of biological role, aspartyl-tRNA synthetase with relaxed tRNA specificity since it is able to aspartylate not only its cognate tRNA(Asp) but also tRNA(Asn). Reaction proceeds in two steps: L-aspartate is first activated by ATP to form Asp-AMP and then transferred to the acceptor end of tRNA(Asp/Asn). This is Aspartate--tRNA(Asp/Asn) ligase from Methanococcus maripaludis (strain C6 / ATCC BAA-1332).